Consider the following 317-residue polypeptide: L-lactate dehydrogenase (317 aa).

Residues V18, D39, K44, Y69, and 83–84 contribute to the NAD(+) site; that span reads GA. Residues Q86, R92, and 124-127 each bind substrate; that span reads NPVD. NAD(+) is bound by residues 122–124 and S147; that span reads VTN. 152–155 provides a ligand contact to substrate; sequence DTAR. Beta-D-fructose 1,6-bisphosphate contacts are provided by R157 and H172. H179 functions as the Proton acceptor in the catalytic mechanism. The residue at position 225 (Y225) is a Phosphotyrosine. Residue T234 participates in substrate binding.

Belongs to the LDH/MDH superfamily. LDH family. In terms of assembly, homotetramer.

It is found in the cytoplasm. It carries out the reaction (S)-lactate + NAD(+) = pyruvate + NADH + H(+). The protein operates within fermentation; pyruvate fermentation to lactate; (S)-lactate from pyruvate: step 1/1. Allosterically activated by fructose 1,6-bisphosphate (FBP). In terms of biological role, catalyzes the conversion of lactate to pyruvate. The chain is L-lactate dehydrogenase from Acetivibrio thermocellus (strain ATCC 27405 / DSM 1237 / JCM 9322 / NBRC 103400 / NCIMB 10682 / NRRL B-4536 / VPI 7372) (Clostridium thermocellum).